A 459-amino-acid polypeptide reads, in one-letter code: Cysteine--tRNA ligase (459 aa).

Cysteine 28 contacts Zn(2+). The 'HIGH' region motif lies at 30-40 (ITIYDYCHIGH). 3 residues coordinate Zn(2+): cysteine 209, histidine 234, and glutamate 238. The short motif at 266-270 (KMSKS) is the 'KMSKS' region element. Residue lysine 269 participates in ATP binding.

It belongs to the class-I aminoacyl-tRNA synthetase family. In terms of assembly, monomer. The cofactor is Zn(2+).

The protein localises to the cytoplasm. The catalysed reaction is tRNA(Cys) + L-cysteine + ATP = L-cysteinyl-tRNA(Cys) + AMP + diphosphate. The chain is Cysteine--tRNA ligase from Pseudoalteromonas translucida (strain TAC 125).